The following is a 1802-amino-acid chain: U3 small nucleolar RNA-associated protein 10 (1802 aa).

The stretch at 581–618 (MDLQALLPFVLVTLADPSERVRREAAGILTIIGSLHKN) is one HEAT 1 repeat. 2 consecutive transmembrane segments (helical) span residues 946–966 (VQSGMSYLLSLALGSLLAIVN) and 1002–1022 (ALLLVAGLSVIAPELVLHSVM). HEAT repeat units follow at residues 1046–1083 (QTIDQVVPALIQSLRNQKRDVVSGTSELLLSFTAAFEH), 1253–1290 (LSLVDFLDTIEVLLQRPNDELRRKVLRLLEGRLRQNPE), 1297–1335 (TRMLDFLSVLVKIVESSPDILLKHAAVACIDRIADKYGK), and 1758–1795 (ALLPEMLPYISELMEDEDENVEKEVRKWVKQIEDVLGE).

The protein belongs to the HEATR1/UTP10 family. As to quaternary structure, component of the ribosomal small subunit (SSU) processome.

Its subcellular location is the nucleus. It localises to the nucleolus. It is found in the membrane. In terms of biological role, involved in nucleolar processing of pre-18S ribosomal RNA. Involved in ribosome biosynthesis. This Aspergillus oryzae (strain ATCC 42149 / RIB 40) (Yellow koji mold) protein is U3 small nucleolar RNA-associated protein 10.